A 269-amino-acid chain; its full sequence is Ribosomal RNA small subunit methyltransferase A (269 aa).

Asparagine 11, leucine 13, glycine 37, glutamate 57, aspartate 85, and asparagine 104 together coordinate S-adenosyl-L-methionine.

The protein belongs to the class I-like SAM-binding methyltransferase superfamily. rRNA adenine N(6)-methyltransferase family. RsmA subfamily.

The protein localises to the cytoplasm. The enzyme catalyses adenosine(1518)/adenosine(1519) in 16S rRNA + 4 S-adenosyl-L-methionine = N(6)-dimethyladenosine(1518)/N(6)-dimethyladenosine(1519) in 16S rRNA + 4 S-adenosyl-L-homocysteine + 4 H(+). Functionally, specifically dimethylates two adjacent adenosines (A1518 and A1519) in the loop of a conserved hairpin near the 3'-end of 16S rRNA in the 30S particle. May play a critical role in biogenesis of 30S subunits. The protein is Ribosomal RNA small subunit methyltransferase A of Campylobacter hominis (strain ATCC BAA-381 / DSM 21671 / CCUG 45161 / LMG 19568 / NCTC 13146 / CH001A).